The chain runs to 469 residues: Actin-related protein 4 (469 aa).

The disordered stretch occupies residues 104 to 136 (PERSTPPSKKGINISDDGDVPMEDDGNNNEDAT). The segment covering 119 to 136 (DDGDVPMEDDGNNNEDAT) has biased composition (acidic residues).

The protein belongs to the actin family. ARP4 subfamily. As to quaternary structure, component of the NuA4 histone acetyltransferase complex, of the INO80 chromatin remodeling complex, and of the SWR1 chromatin remodeling complex.

It localises to the nucleus. Functionally, chromatin interaction component of the NuA4 histone acetyltransferase complex which is involved in transcriptional activation of selected genes principally by acetylation of nucleosomal histone H4 and H2A. The NuA4 complex is also involved in DNA repair. Is required for NuA4 complex integrity. Component of the SWR1 complex which mediates the ATP-dependent exchange of histone H2A for the H2A variant H2A.Z leading to transcriptional regulation of selected genes by chromatin remodeling. Component of the INO80 complex which remodels chromatin by shifting nucleosomes and is involved in DNA repair. This Neurospora crassa (strain ATCC 24698 / 74-OR23-1A / CBS 708.71 / DSM 1257 / FGSC 987) protein is Actin-related protein 4 (arp-4).